We begin with the raw amino-acid sequence, 142 residues long: Group IIE secretory phospholipase A2 (142 aa).

A signal peptide spans 1-19 (MKSPHVLVFLCLLVALVTG). Residues Asp41, Gly43, Tyr45, Gly47, and Gly49 each coordinate Ca(2+). Disulfide bonds link Cys44/Cys135, Cys46/Cys62, Cys61/Cys115, Cys67/Cys142, Cys68/Cys108, Cys77/Cys101, and Cys95/Cys106. His65 is an active-site residue. Position 66 (Asp66) interacts with Ca(2+). Residue Asp109 is part of the active site. Residues Tyr130 and Asn132 each coordinate Ca(2+).

The protein belongs to the phospholipase A2 family. The cofactor is Ca(2+). Restricted to the brain, heart, lung, and placenta.

The protein resides in the secreted. Its subcellular location is the cytoplasm. It catalyses the reaction a 1,2-diacyl-sn-glycero-3-phosphoethanolamine + H2O = a 1-acyl-sn-glycero-3-phosphoethanolamine + a fatty acid + H(+). The catalysed reaction is 1-hexadecanoyl-2-(9Z-octadecenoyl)-sn-glycero-3-phosphoethanolamine + H2O = 1-hexadecanoyl-sn-glycero-3-phosphoethanolamine + (9Z)-octadecenoate + H(+). The enzyme catalyses 1-hexadecanoyl-2-(9Z,12Z-octadecadienoyl)-sn-glycero-3-phosphoethanolamine + H2O = 1-hexadecanoyl-sn-glycero-3-phosphoethanolamine + (9Z,12Z)-octadecadienoate + H(+). It carries out the reaction 1-hexadecanoyl-2-(5Z,8Z,11Z,14Z-eicosatetraenoyl)-sn-glycero-3-phosphoethanolamine + H2O = 1-hexadecanoyl-sn-glycero-3-phosphoethanolamine + (5Z,8Z,11Z,14Z)-eicosatetraenoate + H(+). It catalyses the reaction 1,2-dihexadecanoyl-sn-glycero-3-phospho-(1'-sn-glycerol) + H2O = 1-hexadecanoyl-sn-glycero-3-phospho-(1'-sn-glycerol) + hexadecanoate + H(+). The catalysed reaction is 1-hexadecanoyl-2-(9Z-octadecenoyl)-sn-glycero-3-phosphoglycerol + H2O = 1-hexadecanoyl-sn-glycero-3-phosphoglycerol + (9Z)-octadecenoate + H(+). The enzyme catalyses a 1,2-diacyl-sn-glycero-3-phosphocholine + H2O = a 1-acyl-sn-glycero-3-phosphocholine + a fatty acid + H(+). It carries out the reaction 1,2-dihexadecanoyl-sn-glycero-3-phosphocholine + H2O = 1-hexadecanoyl-sn-glycero-3-phosphocholine + hexadecanoate + H(+). It catalyses the reaction 1-hexadecanoyl-2-(9Z-octadecenoyl)-sn-glycero-3-phosphocholine + H2O = 1-hexadecanoyl-sn-glycero-3-phosphocholine + (9Z)-octadecenoate + H(+). The catalysed reaction is 1-hexadecanoyl-2-(9Z,12Z-octadecadienoyl)-sn-glycero-3-phosphocholine + H2O = (9Z,12Z)-octadecadienoate + 1-hexadecanoyl-sn-glycero-3-phosphocholine + H(+). The enzyme catalyses 1-hexadecanoyl-2-(4Z,7Z,10Z,13Z,16Z,19Z-docosahexaenoyl)-sn-glycero-3-phosphocholine + H2O = (4Z,7Z,10Z,13Z,16Z,19Z)-docosahexaenoate + 1-hexadecanoyl-sn-glycero-3-phosphocholine + H(+). Secretory calcium-dependent phospholipase A2 that primarily targets extracellular phospholipids. Hydrolyzes the ester bond of the fatty acyl group attached at sn-2 position of phospholipids (phospholipase A2 activity), releasing various unsaturated fatty acids including oleoate, linoleoate, arachidonate, docosahexaenoate and lysophosphatidylethanolamines in preference to lysophosphatidylcholines. In response to high-fat diet, hydrolyzes minor lipoprotein phospholipids including phosphatidylserines, phosphatidylinositols and phosphatidylglycerols, altering lipoprotein composition and fat storage in adipose tissue and liver. May act in an autocrine and paracrine manner. Contributes to lipid remodeling of cellular membranes and generation of lipid mediators involved in pathogen clearance. Cleaves sn-2 fatty acyl chains of phosphatidylglycerols and phosphatidylethanolamines, which are major components of membrane phospholipids in bacteria. Acts as a hair follicle phospholipase A2. Selectively releases lysophosphatidylethanolamines (LPE) and various unsaturated fatty acids in skin to regulate hair follicle homeostasis. May regulate the inflammatory response by releasing arachidonate, a precursor of prostaglandins and leukotrienes. Upon allergen exposure, may participate in allergic inflammatory response by enhancing leukotriene C4 synthesis and degranulation in mast cells. The polypeptide is Group IIE secretory phospholipase A2 (PLA2G2E) (Homo sapiens (Human)).